Consider the following 251-residue polypeptide: Haloacid dehalogenase-like hydrolase domain-containing protein 3 (251 aa).

The residue at position 15 (K15) is an N6-acetyllysine; alternate. K15 bears the N6-succinyllysine; alternate mark. The residue at position 130 (K130) is an N6-acetyllysine.

The protein belongs to the HAD-like hydrolase superfamily.

This chain is Haloacid dehalogenase-like hydrolase domain-containing protein 3 (HDHD3), found in Bos taurus (Bovine).